A 439-amino-acid polypeptide reads, in one-letter code: sn-glycerol-3-phosphate-binding periplasmic protein UgpB (439 aa).

The first 25 residues, 1–25, serve as a signal peptide directing secretion; it reads MFNNSIHKVSICIALTLTFSANAMA. 7 residues coordinate sn-glycerol 3-phosphate: Y67, E91, S146, S272, G309, Y348, and R399.

It belongs to the bacterial solute-binding protein 1 family. The complex is composed of two ATP-binding proteins (UgpC), two transmembrane proteins (UgpA and UgpE) and a solute-binding protein (UgpB).

It is found in the periplasm. Its function is as follows. Part of the ABC transporter complex UgpBAEC involved in sn-glycerol-3-phosphate (G3P) import. Binds G3P. This is sn-glycerol-3-phosphate-binding periplasmic protein UgpB (ugpB) from Yersinia pestis bv. Antiqua (strain Antiqua).